The primary structure comprises 485 residues: G2/mitotic-specific cyclin-A1 (485 aa).

The tract at residues 1-24 (MRSALSLKPSNGNAAKSQAVNNKN) is disordered. Residues 8 to 24 (KPSNGNAAKSQAVNNKN) are compositionally biased toward polar residues.

The protein belongs to the cyclin family. Cyclin AB subfamily. Expressed in the cell lineages ABarp, C and E as well as the NSM neuroblasts.

In terms of biological role, involved in the control of the cell cycle after S phase. May bind to and activate cdk-1 and/or cdk-2 to promote cell cycle progression. Necessary for embryogenesis. The sequence is that of G2/mitotic-specific cyclin-A1 (cya-1) from Caenorhabditis elegans.